The primary structure comprises 604 residues: ERAD-associated E3 ubiquitin-protein ligase component HRD3B (604 aa).

The N-terminal stretch at 1–25 is a signal peptide; the sequence is MRVSGQSIIAISLFTLSLYIHRVQA. The tract at residues 48–69 is disordered; sequence ESSDFDEFGESEPKSEEELDPG. Asn-78 and Asn-105 each carry an N-linked (GlcNAc...) asparagine glycan. Sel1-like repeat units follow at residues 125-160, 244-274, 279-307, 311-344, 346-380, 464-492, and 498-528; these read PHAQSVMGFVYGIGMMRETSRSKSILHHHFAAAGGN, VAMHKIGLFYYFGLRGLRRDHAKALYWFSKA, LGYLYVKGYGVDKRNYTKAREYFEMAANN, SGHYNLGVLYLKGTGVKKDVRHATKYFFVAANAG, PKAFYQLAKMFHTGVGLTKNLEMATTFYKLVAERG, AALLIGDAYYYGRGTERDFVRAAEAYMYA, and AQAMFNLGYMHEHGEGLPFDLHLAKRYYDQA. Residue Asn-293 is glycosylated (N-linked (GlcNAc...) asparagine).

The protein belongs to the sel-1 family.

May be involved in the endoplasmic reticulum (ER) quality control system called ER-associated degradation (ERAD). The polypeptide is ERAD-associated E3 ubiquitin-protein ligase component HRD3B (Arabidopsis thaliana (Mouse-ear cress)).